Reading from the N-terminus, the 819-residue chain is Leucine--tRNA ligase (819 aa).

Positions 40 to 51 (PYPSGAGLHVGH) match the 'HIGH' region motif. A 'KMSKS' region motif is present at residues 600 to 604 (KMSKS). K603 is a binding site for ATP.

This sequence belongs to the class-I aminoacyl-tRNA synthetase family.

Its subcellular location is the cytoplasm. The catalysed reaction is tRNA(Leu) + L-leucine + ATP = L-leucyl-tRNA(Leu) + AMP + diphosphate. The protein is Leucine--tRNA ligase of Chlamydia trachomatis serovar L2 (strain ATCC VR-902B / DSM 19102 / 434/Bu).